The primary structure comprises 494 residues: Alpha-amylase-related protein (494 aa).

Positions 1 to 20 (MIKFALALTLCLAGASLSLA) are cleaved as a signal peptide. Pyrrolidone carboxylic acid is present on Gln21. Cys48 and Cys104 form a disulfide bridge. Ca(2+)-binding residues include Asn118, Gln169, and Asp178. A disulfide bridge connects residues Cys157 and Cys171. Arg206 is a chloride binding site. The Nucleophile role is filled by Asp208. His212 contributes to the Ca(2+) binding site. Glu245 serves as the catalytic Proton donor. Positions 308 and 343 each coordinate chloride. Intrachain disulfides connect Cys376–Cys382, Cys418–Cys441, and Cys448–Cys460.

It belongs to the glycosyl hydrolase 13 family. In terms of assembly, monomer. Ca(2+) serves as cofactor. It depends on chloride as a cofactor.

It localises to the secreted. It catalyses the reaction Endohydrolysis of (1-&gt;4)-alpha-D-glucosidic linkages in polysaccharides containing three or more (1-&gt;4)-alpha-linked D-glucose units.. This chain is Alpha-amylase-related protein (Amyrel), found in Drosophila kikkawai (Fruit fly).